We begin with the raw amino-acid sequence, 315 residues long: MEYRVTEILTFAEPDLLNERQSWLATLAGERRLADNTVEAYERDTRQFLRFLTGYIGRPAAIRDIADLRPVDLRAFLANRRKEGAGARSLGRHLAGLRSLLHHLQKKGLVNAAGATAMRAPKQPKSLPKPLTDRQALKITTAEAQLNEEPWIAARNAAVLSLLYGCGLRISEALGLTPADFPPGTRSLRITGKGNKTRIVPLLAVVTEAVDTYRKLCPYALAADEPMFLGARGGKLQPAIIQREMQKLRGAFGLPENATPHALRHSFATHLLAGGGDLRTIQELLGHASLSTTQVYTGVDTARLLEIYDNAHPRA.

Positions 14–105 (PDLLNERQSW…GLRSLLHHLQ (92 aa)) constitute a Core-binding (CB) domain. Residues 126 to 309 (SLPKPLTDRQ…DTARLLEIYD (184 aa)) enclose the Tyr recombinase domain. Active-site residues include R169, K193, H261, R264, and H287. Y296 serves as the catalytic O-(3'-phospho-DNA)-tyrosine intermediate.

Belongs to the 'phage' integrase family. XerC subfamily. Forms a cyclic heterotetrameric complex composed of two molecules of XerC and two molecules of XerD.

Its subcellular location is the cytoplasm. In terms of biological role, site-specific tyrosine recombinase, which acts by catalyzing the cutting and rejoining of the recombining DNA molecules. The XerC-XerD complex is essential to convert dimers of the bacterial chromosome into monomers to permit their segregation at cell division. It also contributes to the segregational stability of plasmids. This Agrobacterium fabrum (strain C58 / ATCC 33970) (Agrobacterium tumefaciens (strain C58)) protein is Tyrosine recombinase XerC.